The sequence spans 242 residues: Ribosomal RNA small subunit methyltransferase G (242 aa).

Residues glycine 78, leucine 83, alanine 130–glutamate 131, and arginine 151 each bind S-adenosyl-L-methionine.

This sequence belongs to the methyltransferase superfamily. RNA methyltransferase RsmG family.

Its subcellular location is the cytoplasm. In terms of biological role, specifically methylates the N7 position of guanine in position 518 of 16S rRNA. The protein is Ribosomal RNA small subunit methyltransferase G of Salinispora arenicola (strain CNS-205).